Consider the following 78-residue polypeptide: Defensin-like protein 171 (78 aa).

The signal sequence occupies residues 1–23; the sequence is MAKTASSLVLPIIFLVMFALVEQ. Disulfide bonds link Cys-27–Cys-71, Cys-34–Cys-56, Cys-40–Cys-65, and Cys-44–Cys-67.

It belongs to the DEFL family.

It is found in the secreted. This Arabidopsis thaliana (Mouse-ear cress) protein is Defensin-like protein 171 (LCR61).